Here is a 294-residue protein sequence, read N- to C-terminus: N-acetylmuramic acid 6-phosphate etherase (294 aa).

An SIS domain is found at 56–219 (TSYSLRNGGR…STLSMVSVGK (164 aa)). E84 functions as the Proton donor in the catalytic mechanism. Residue E115 is part of the active site.

This sequence belongs to the GCKR-like family. MurNAc-6-P etherase subfamily. Homodimer.

It carries out the reaction N-acetyl-D-muramate 6-phosphate + H2O = N-acetyl-D-glucosamine 6-phosphate + (R)-lactate. It functions in the pathway amino-sugar metabolism; 1,6-anhydro-N-acetylmuramate degradation. The protein operates within amino-sugar metabolism; N-acetylmuramate degradation. It participates in cell wall biogenesis; peptidoglycan recycling. In terms of biological role, specifically catalyzes the cleavage of the D-lactyl ether substituent of MurNAc 6-phosphate, producing GlcNAc 6-phosphate and D-lactate. Together with AnmK, is also required for the utilization of anhydro-N-acetylmuramic acid (anhMurNAc) either imported from the medium or derived from its own cell wall murein, and thus plays a role in cell wall recycling. In Francisella tularensis subsp. tularensis (strain SCHU S4 / Schu 4), this protein is N-acetylmuramic acid 6-phosphate etherase.